The primary structure comprises 347 residues: Probable RNA methyltransferase azo0122 (347 aa).

The active-site Proton acceptor is E89. Residues L92–D318 form the Radical SAM core domain. C99 and C323 are disulfide-bonded. Positions 106, 110, and 113 each coordinate [4Fe-4S] cluster. S-adenosyl-L-methionine is bound by residues G151 to E152, S181, S204 to H206, and N280. C323 acts as the S-methylcysteine intermediate in catalysis.

The protein belongs to the radical SAM superfamily. RlmN family. It depends on [4Fe-4S] cluster as a cofactor.

Its subcellular location is the cytoplasm. This is Probable RNA methyltransferase azo0122 from Azoarcus sp. (strain BH72).